A 2359-amino-acid polypeptide reads, in one-letter code: Low-reducing polyketide synthase drtA (2359 aa).

Residues 17 to 444 form the Ketosynthase family 3 (KS3) domain; the sequence is LPPIAVVSFA…GANAHVIVEE (428 aa). Catalysis depends on for beta-ketoacyl synthase activity residues C190, H327, and H367. Positions 556-868 are malonyl-CoA:ACP transacylase (MAT) domain; sequence VFTGQGSQWP…QYLAALDRGK (313 aa). S648 functions as the For malonyltransferase activity in the catalytic mechanism. The tract at residues 940–1077 is N-terminal hotdog fold; the sequence is HELLGRKILG…GRISVRQVAA (138 aa). The segment at 940 to 1245 is dehydratase (DH) domain; the sequence is HELLGRKILG…FKGLRFSELN (306 aa). In terms of domain architecture, PKS/mFAS DH spans 940–1250; the sequence is HELLGRKILG…FSELNMGDGV (311 aa). H972 acts as the Proton acceptor; for dehydratase activity in catalysis. The interval 1089 to 1250 is C-terminal hotdog fold; it reads AYSESAEHWY…FSELNMGDGV (162 aa). Catalysis depends on D1153, which acts as the Proton donor; for dehydratase activity. Residues 1659–1970 are enoyl reductase (ER) domain; it reads GSFDSLELYE…TGRHVGKVVV (312 aa). The segment at 1995–2172 is ketoreductase (KR) domain; the sequence is SYLITGGLHG…LSLDIGAVQD (178 aa). In terms of domain architecture, Carrier spans 2280–2356; it reads ALTEAAIELF…ALCSKLITRL (77 aa). An O-(pantetheine 4'-phosphoryl)serine modification is found at S2316.

It functions in the pathway secondary metabolite biosynthesis; terpenoid biosynthesis. In terms of biological role, low-reducing polyketide synthase; part of the gene cluster that mediates the biosynthesis of various drimane-type sesquiterpene esters, compounds that exhibit diverse biological activities and are widely present in eukaryotes. The pathway begins with the synthesis of the backbone drimenol by the terpene cyclase drtB using farnesyl pyrophosphate (FPP) as substrate. The cytochrome P450 monooxygenase drtD is then responsible for the hydroxylations at C-6, C-9 and C-12, as well as the oxidation of hydroxyl groups at C-6 and C-11 to a ketone and an aldehyde, respectively. Then, the biosynthesis can go in two directions, either the hydroxylated drimenol is further hydroxylated at C-2 and C-3 by an enzyme(s) not associated with the drt cluster, or the FAD-binding oxidoreductase drtC further oxidizes C-11 or C-12 to form the butyrolactone ring. DrtB, drtD and drtC are solely responsible for the formation of the different drimane structures observed during drimane sesquiterpenes biosynthesis. The polyketide synthase drtA synthesizes different lengths (C6 and C8) of PKS chains, which are then oxidized to varying degrees by the short-chain dehydrogenase drtF. Finally, these PKS chains are transferred onto drimane sesquiterpenes by the acyltransferase drtE, forming the sesquiterpene esters. In addition to the different fatty acyl-CoA chains produced by drtA, drtE is also able to use cinnamoyl-CoA as a substrate. The sequence is that of Low-reducing polyketide synthase drtA from Aspergillus calidoustus.